A 142-amino-acid polypeptide reads, in one-letter code: Large ribosomal subunit protein uL13 (142 aa).

It belongs to the universal ribosomal protein uL13 family. As to quaternary structure, part of the 50S ribosomal subunit.

Functionally, this protein is one of the early assembly proteins of the 50S ribosomal subunit, although it is not seen to bind rRNA by itself. It is important during the early stages of 50S assembly. The sequence is that of Large ribosomal subunit protein uL13 from Alcanivorax borkumensis (strain ATCC 700651 / DSM 11573 / NCIMB 13689 / SK2).